Reading from the N-terminus, the 929-residue chain is Thrombospondin-3b (929 aa).

The signal sequence occupies residues 1 to 22 (MELRKIVPNLLVLYVAVHFSQS). A Laminin G-like domain is found at 24–192 (EIKVINVLEL…VESVKLALGG (169 aa)). A glycan (N-linked (GlcNAc...) asparagine) is linked at Asn-45. Disulfide bonds link Cys-277/Cys-288, Cys-282/Cys-299, Cys-319/Cys-343, Cys-349/Cys-362, Cys-356/Cys-371, Cys-374/Cys-386, Cys-392/Cys-406, Cys-400/Cys-416, Cys-418/Cys-429, Cys-445/Cys-452, Cys-457/Cys-477, Cys-493/Cys-513, Cys-516/Cys-536, Cys-552/Cys-572, Cys-575/Cys-595, Cys-613/Cys-633, Cys-653/Cys-673, and Cys-689/Cys-910. An EGF-like 1; calcium-binding domain is found at 345–384 (DIDECAELSGSCVPNSVCINTVGSFKCGQCKAGFVGNQTV). The N-linked (GlcNAc...) asparagine glycan is linked to Asn-381. In terms of domain architecture, EGF-like 2 spans 388 to 430 (ARRTCETLGYSPCDVNSHCVMGRNSDVSCVCNVGWAGNGNICG). 8 TSP type-3 repeats span residues 431 to 465 (PDSD…NSGQ), 466 to 501 (EDTD…NKDQ), 502 to 524 (QNSD…NGDQ), 525 to 560 (LDTD…NPMQ), 561 to 583 (TDRD…DPLQ), 584 to 621 (SDMD…NSSQ), 622 to 661 (LDSD…NPSQ), and 662 to 697 (IDTD…EVTM). The span at 602 to 613 (DGDGYQDTRDNC) shows a compositional bias: basic and acidic residues. The disordered stretch occupies residues 602 to 651 (DGDGYQDTRDNCPEVPNSSQLDSDNDGIGDECDDDDDNDGIPDILPPGPD). Residue Asn-618 is glycosylated (N-linked (GlcNAc...) asparagine). Over residues 624–641 (SDNDGIGDECDDDDDNDG) the composition is skewed to acidic residues. Positions 701-915 (RAFQTVILDP…LGYRCNDSIP (215 aa)) constitute a TSP C-terminal domain. A glycan (N-linked (GlcNAc...) asparagine) is linked at Asn-911.

The protein belongs to the thrombospondin family. Oligomer; disulfide-linked.

Adhesive glycoprotein that mediates cell-to-cell and cell-to-matrix interactions. Can bind to fibrinogen, fibronectin, laminin and type V collagen. This chain is Thrombospondin-3b, found in Danio rerio (Zebrafish).